Here is a 510-residue protein sequence, read N- to C-terminus: MIWHVQNENFILDSTRIFMKAFHLLLFHGSFIFPECILIFGLILLLMIDSTSDQKDIPWLYFISSTSLVMSITALLFRWREEPMISFSGNFQTNNFNEIFQFLILLCSTLCIPLSVEYIECTEMAITEFLLFVLTATLGGMFLCGANDSITIFVAPECFSLCSYLLSGYTKRDVRSNEATTKYLLMGGASSSILVHGFSWLYGSSGGEIELQEIVNGLINTQMYNSPGISIALIFITVGIGFKLSPAPFHQWTPDVYEGSPTPVVAFLSVTSKVAASAPATRIFDIPFYFSSNEWHLLLEILAILSMILGNLIAITQTSMKRMLAYSSIGQIGYVIIGIIVGDSNDGYASMITYMLFYISMNLGTFARIVLFGLRTGTDNIRDYAGLYTKDPFLALSSALCLLSLGGLPPLAGFFGKLHLFWCGWQAGLYFLVSIGLLTSVVSIYYYLKIIKLLMTGRKQEITPHVRNYRRSPLRSNNSIELSMIVCVIASTIPGISMNPIIAIAQDTLF.

A run of 13 helical transmembrane segments spans residues 24-44 (LLLFHGSFIFPECILIFGLIL), 57-77 (IPWLYFISSTSLVMSITALLF), 99-119 (IFQFLILLCSTLCIPLSVEYI), 124-144 (MAITEFLLFVLTATLGGMFLC), 150-170 (ITIFVAPECFSLCSYLLSGYT), 183-203 (YLLMGGASSSILVHGFSWLYG), 229-249 (ISIALIFITVGIGFKLSPAPF), 295-315 (WHLLLEILAILSMILGNLIAI), 323-343 (MLAYSSIGQIGYVIIGIIVGD), 354-374 (YMLFYISMNLGTFARIVLFGL), 395-415 (ALSSALCLLSLGGLPPLAGFF), 418-438 (LHLFWCGWQAGLYFLVSIGLL), and 484-504 (MIVCVIASTIPGISMNPIIAI).

Belongs to the complex I subunit 2 family. As to quaternary structure, NDH is composed of at least 16 different subunits, 5 of which are encoded in the nucleus.

Its subcellular location is the plastid. It localises to the chloroplast thylakoid membrane. The catalysed reaction is a plastoquinone + NADH + (n+1) H(+)(in) = a plastoquinol + NAD(+) + n H(+)(out). It catalyses the reaction a plastoquinone + NADPH + (n+1) H(+)(in) = a plastoquinol + NADP(+) + n H(+)(out). In terms of biological role, NDH shuttles electrons from NAD(P)H:plastoquinone, via FMN and iron-sulfur (Fe-S) centers, to quinones in the photosynthetic chain and possibly in a chloroplast respiratory chain. The immediate electron acceptor for the enzyme in this species is believed to be plastoquinone. Couples the redox reaction to proton translocation, and thus conserves the redox energy in a proton gradient. The chain is NAD(P)H-quinone oxidoreductase subunit 2 B, chloroplastic from Drimys granadensis.